A 209-amino-acid chain; its full sequence is Uracil phosphoribosyltransferase (209 aa).

5-phospho-alpha-D-ribose 1-diphosphate-binding positions include Arg79, Arg104, and 131 to 139; that span reads DPMLATGGS. Uracil-binding positions include Ile194 and 199-201; that span reads GDA. A 5-phospho-alpha-D-ribose 1-diphosphate-binding site is contributed by Asp200.

Belongs to the UPRTase family. Mg(2+) serves as cofactor.

It catalyses the reaction UMP + diphosphate = 5-phospho-alpha-D-ribose 1-diphosphate + uracil. The protein operates within pyrimidine metabolism; UMP biosynthesis via salvage pathway; UMP from uracil: step 1/1. With respect to regulation, allosterically activated by GTP. Catalyzes the conversion of uracil and 5-phospho-alpha-D-ribose 1-diphosphate (PRPP) to UMP and diphosphate. The protein is Uracil phosphoribosyltransferase of Streptococcus pyogenes serotype M49 (strain NZ131).